The sequence spans 506 residues: ATP synthase subunit alpha (506 aa).

170-177 contacts ATP; the sequence is GDRQTGKT.

It belongs to the ATPase alpha/beta chains family. F-type ATPases have 2 components, CF(1) - the catalytic core - and CF(0) - the membrane proton channel. CF(1) has five subunits: alpha(3), beta(3), gamma(1), delta(1), epsilon(1). CF(0) has four main subunits: a(1), b(1), b'(1) and c(9-12).

It localises to the cellular thylakoid membrane. The enzyme catalyses ATP + H2O + 4 H(+)(in) = ADP + phosphate + 5 H(+)(out). Functionally, produces ATP from ADP in the presence of a proton gradient across the membrane. The alpha chain is a regulatory subunit. In Synechococcus sp. (strain CC9311), this protein is ATP synthase subunit alpha.